Consider the following 445-residue polypeptide: Phosphoglucosamine mutase (445 aa).

S104 (phosphoserine intermediate) is an active-site residue. S104, D243, D245, and D247 together coordinate Mg(2+). S104 is modified (phosphoserine).

It belongs to the phosphohexose mutase family. Mg(2+) is required as a cofactor. In terms of processing, activated by phosphorylation.

It catalyses the reaction alpha-D-glucosamine 1-phosphate = D-glucosamine 6-phosphate. In terms of biological role, catalyzes the conversion of glucosamine-6-phosphate to glucosamine-1-phosphate. The chain is Phosphoglucosamine mutase from Chromobacterium violaceum (strain ATCC 12472 / DSM 30191 / JCM 1249 / CCUG 213 / NBRC 12614 / NCIMB 9131 / NCTC 9757 / MK).